Here is a 133-residue protein sequence, read N- to C-terminus: Small ribosomal subunit protein uS8 (133 aa).

Belongs to the universal ribosomal protein uS8 family. As to quaternary structure, part of the 30S ribosomal subunit. Contacts proteins S5 and S12.

In terms of biological role, one of the primary rRNA binding proteins, it binds directly to 16S rRNA central domain where it helps coordinate assembly of the platform of the 30S subunit. The chain is Small ribosomal subunit protein uS8 from Leptospira interrogans serogroup Icterohaemorrhagiae serovar copenhageni (strain Fiocruz L1-130).